Here is a 380-residue protein sequence, read N- to C-terminus: Epoxyqueuosine reductase (380 aa).

Catalysis depends on Asp-134, which acts as the Proton donor. One can recognise a 4Fe-4S ferredoxin-type 1 domain in the interval 179–208 (PPDQPIEDQCGSCTKCIDICPTGALIQGGQ). [4Fe-4S] cluster contacts are provided by Cys-188, Cys-191, Cys-194, Cys-198, Cys-214, Cys-240, Cys-243, and Cys-247. Residues 226–258 (PEEYRDKIGNRIYGCDTCQTVCPKNKGMDFHNH) enclose the 4Fe-4S ferredoxin-type 2 domain.

It belongs to the QueG family. As to quaternary structure, monomer. The cofactor is cob(II)alamin. [4Fe-4S] cluster serves as cofactor.

It localises to the cytoplasm. It carries out the reaction epoxyqueuosine(34) in tRNA + AH2 = queuosine(34) in tRNA + A + H2O. The protein operates within tRNA modification; tRNA-queuosine biosynthesis. Catalyzes the conversion of epoxyqueuosine (oQ) to queuosine (Q), which is a hypermodified base found in the wobble positions of tRNA(Asp), tRNA(Asn), tRNA(His) and tRNA(Tyr). This Bacillus anthracis protein is Epoxyqueuosine reductase.